The following is a 333-amino-acid chain: Arginase (333 aa).

Met-1 is modified (N-acetylmethionine). Ser-16 carries the post-translational modification Phosphoserine. Thr-77 bears the Phosphothreonine mark. 4 residues coordinate Mn(2+): His-123, Asp-146, His-148, and Asp-150. Substrate is bound by residues 148-152 (HADIN), 159-161 (SGN), and Asp-205. The Mn(2+) site is built by Asp-256 and Asp-258. Thr-270 is subject to Phosphothreonine. The substrate site is built by Thr-270 and Glu-301.

Belongs to the arginase family. In terms of assembly, homotrimer. It depends on Mn(2+) as a cofactor.

It carries out the reaction L-arginine + H2O = urea + L-ornithine. The protein operates within nitrogen metabolism; urea cycle; L-ornithine and urea from L-arginine: step 1/1. This is Arginase (CAR1) from Saccharomyces cerevisiae (strain ATCC 204508 / S288c) (Baker's yeast).